Reading from the N-terminus, the 466-residue chain is Glutamate--tRNA ligase 1 (466 aa).

The 'HIGH' region motif lies at 9–19 (PSPTGYLHIGG). Zn(2+) contacts are provided by C98, C100, C125, and E127. The 'KMSKS' region motif lies at 236–240 (KLSKR). K239 serves as a coordination point for ATP.

It belongs to the class-I aminoacyl-tRNA synthetase family. Glutamate--tRNA ligase type 1 subfamily. As to quaternary structure, monomer. The cofactor is Zn(2+).

It is found in the cytoplasm. It carries out the reaction tRNA(Glu) + L-glutamate + ATP = L-glutamyl-tRNA(Glu) + AMP + diphosphate. In terms of biological role, catalyzes the attachment of glutamate to tRNA(Glu) in a two-step reaction: glutamate is first activated by ATP to form Glu-AMP and then transferred to the acceptor end of tRNA(Glu). This Acidithiobacillus ferrooxidans (strain ATCC 53993 / BNL-5-31) (Leptospirillum ferrooxidans (ATCC 53993)) protein is Glutamate--tRNA ligase 1.